The sequence spans 439 residues: tRNA-2-methylthio-N(6)-dimethylallyladenosine synthase (439 aa).

Residues 2–119 (KKLYLKTHGC…LPDLLDSVIQ (118 aa)) enclose the MTTase N-terminal domain. 6 residues coordinate [4Fe-4S] cluster: C11, C48, C82, C156, C160, and C163. Positions 142-374 (RAEGPSAFVS…QNRINAKAAE (233 aa)) constitute a Radical SAM core domain. Positions 377–439 (QSMVGTQQRI…RPYSLWGEIC (63 aa)) constitute a TRAM domain.

The protein belongs to the methylthiotransferase family. MiaB subfamily. As to quaternary structure, monomer. It depends on [4Fe-4S] cluster as a cofactor.

The protein resides in the cytoplasm. It carries out the reaction N(6)-dimethylallyladenosine(37) in tRNA + (sulfur carrier)-SH + AH2 + 2 S-adenosyl-L-methionine = 2-methylsulfanyl-N(6)-dimethylallyladenosine(37) in tRNA + (sulfur carrier)-H + 5'-deoxyadenosine + L-methionine + A + S-adenosyl-L-homocysteine + 2 H(+). Its function is as follows. Catalyzes the methylthiolation of N6-(dimethylallyl)adenosine (i(6)A), leading to the formation of 2-methylthio-N6-(dimethylallyl)adenosine (ms(2)i(6)A) at position 37 in tRNAs that read codons beginning with uridine. The chain is tRNA-2-methylthio-N(6)-dimethylallyladenosine synthase from Coxiella burnetii (strain CbuK_Q154) (Coxiella burnetii (strain Q154)).